We begin with the raw amino-acid sequence, 321 residues long: L-lactate dehydrogenase (321 aa).

Residues valine 19, aspartate 40, lysine 45, tyrosine 71, and glycine 85–alanine 86 each bind NAD(+). Substrate is bound by residues glutamine 88, arginine 94, and asparagine 126–aspartate 129. NAD(+)-binding positions include alanine 124–asparagine 126 and serine 149. Aspartate 154–arginine 157 serves as a coordination point for substrate. Arginine 159 and histidine 174 together coordinate beta-D-fructose 1,6-bisphosphate. Catalysis depends on histidine 181, which acts as the Proton acceptor. Tyrosine 226 is subject to Phosphotyrosine. Residue threonine 235 participates in substrate binding.

This sequence belongs to the LDH/MDH superfamily. LDH family. As to quaternary structure, homotetramer.

It localises to the cytoplasm. It carries out the reaction (S)-lactate + NAD(+) = pyruvate + NADH + H(+). The protein operates within fermentation; pyruvate fermentation to lactate; (S)-lactate from pyruvate: step 1/1. Allosterically activated by fructose 1,6-bisphosphate (FBP). In terms of biological role, catalyzes the conversion of lactate to pyruvate. The sequence is that of L-lactate dehydrogenase from Oceanobacillus iheyensis (strain DSM 14371 / CIP 107618 / JCM 11309 / KCTC 3954 / HTE831).